The primary structure comprises 207 residues: Reticulon-1-A (207 aa).

The Reticulon domain occupies 21–207 (AIDLLYWRDI…AKIPGTKQKE (187 aa)). 2 helical membrane-spanning segments follow: residues 35–55 (IVFGSVLLMLFSLIQFSVVSV) and 139–159 (VLMWLLTYVGALFNGLTLLIM).

As to expression, expressed in the animal hemisphere (presumptive neural ectoderm) of blastula and gastrula stage embryos, and along the anterior neural border, in the panplacodal primordium, and in the dorsolateral side of archenteron roof of late neurula embryos. At the tailbud stage, expression localizes to the central nervous system, including the spinal cord, prosencephalon, mesencephalon and rhombencephalon, as well as the lateral line placode, otic vesicle and pronephros.

It is found in the endoplasmic reticulum membrane. Its subcellular location is the nucleus. Functionally, inhibits amyloid precursor protein processing, probably by blocking BACE1 activity. The sequence is that of Reticulon-1-A (rtn1-a) from Xenopus laevis (African clawed frog).